We begin with the raw amino-acid sequence, 79 residues long: CDC42 small effector protein 1 (79 aa).

2 S-palmitoyl cysteine lipidation sites follow: Cys-10 and Cys-11. In terms of domain architecture, CRIB spans 30–43; the sequence is IGEPMNFVHLTHIG. Residues 41–79 are disordered; the sequence is HIGSGDMGASDGLPRAGGVQEQMRSKCGRDRQWSNSGVL. A compositionally biased stretch (basic and acidic residues) spans 63–72; that stretch reads MRSKCGRDRQ.

The protein belongs to the CDC42SE/SPEC family.

Its subcellular location is the cytoplasm. It localises to the cytoskeleton. The protein resides in the cell membrane. Functionally, probably involved in the organization of the actin cytoskeleton by acting downstream of CDC42, inducing actin filament assembly. The sequence is that of CDC42 small effector protein 1 (cdc42se1) from Xenopus tropicalis (Western clawed frog).